The following is a 1323-amino-acid chain: Sister chromatid cohesion protein PDS5 homolog A-B (1323 aa).

The HEAT repeat unit spans residues 385–421; sequence FLVNDQLLGFVRERTLDKRWRVRKEAMMGLAQLYKKY. Residues 1138–1323 are disordered; it reads PLNATGRRPY…TAQRQIDLHR (186 aa). Residues 1153–1165 show a composition bias toward low complexity; the sequence is SEISNNVSINSES. 2 stretches are compositionally biased toward polar residues: residues 1166–1176 and 1210–1220; these read DASVANRQSSE and LDQTAPSNTGT. Over residues 1235-1246 the composition is skewed to basic and acidic residues; sequence NIRKESEEKKVD.

In terms of assembly, interacts with the cohesin complex. Binds chromatin in a cohesin-dependent manner.

It localises to the nucleus. Its function is as follows. May regulate sister chromatid cohesion during mitosis and couple it to DNA replication. In Xenopus laevis (African clawed frog), this protein is Sister chromatid cohesion protein PDS5 homolog A-B (pds5a-b).